The primary structure comprises 245 residues: 1-(5-phosphoribosyl)-5-[(5-phosphoribosylamino)methylideneamino] imidazole-4-carboxamide isomerase (245 aa).

The active-site Proton acceptor is aspartate 7. The active-site Proton donor is the aspartate 129.

Belongs to the HisA/HisF family.

It is found in the cytoplasm. The catalysed reaction is 1-(5-phospho-beta-D-ribosyl)-5-[(5-phospho-beta-D-ribosylamino)methylideneamino]imidazole-4-carboxamide = 5-[(5-phospho-1-deoxy-D-ribulos-1-ylimino)methylamino]-1-(5-phospho-beta-D-ribosyl)imidazole-4-carboxamide. Its pathway is amino-acid biosynthesis; L-histidine biosynthesis; L-histidine from 5-phospho-alpha-D-ribose 1-diphosphate: step 4/9. This is 1-(5-phosphoribosyl)-5-[(5-phosphoribosylamino)methylideneamino] imidazole-4-carboxamide isomerase from Shewanella putrefaciens (strain CN-32 / ATCC BAA-453).